We begin with the raw amino-acid sequence, 115 residues long: Small ribosomal subunit protein bS6 (115 aa).

It belongs to the bacterial ribosomal protein bS6 family.

Its function is as follows. Binds together with bS18 to 16S ribosomal RNA. The protein is Small ribosomal subunit protein bS6 of Syntrophotalea carbinolica (strain DSM 2380 / NBRC 103641 / GraBd1) (Pelobacter carbinolicus).